Here is a 217-residue protein sequence, read N- to C-terminus: GTP cyclohydrolase 1 (217 aa).

3 residues coordinate Zn(2+): Cys-109, His-112, and Cys-180.

The protein belongs to the GTP cyclohydrolase I family. As to quaternary structure, toroid-shaped homodecamer, composed of two pentamers of five dimers.

It catalyses the reaction GTP + H2O = 7,8-dihydroneopterin 3'-triphosphate + formate + H(+). Its pathway is cofactor biosynthesis; 7,8-dihydroneopterin triphosphate biosynthesis; 7,8-dihydroneopterin triphosphate from GTP: step 1/1. The sequence is that of GTP cyclohydrolase 1 from Vibrio campbellii (strain ATCC BAA-1116).